The primary structure comprises 726 residues: Catalase-peroxidase (726 aa).

The disordered stretch occupies residues 1 to 33; the sequence is MSTTDDTHNTLSTGKCPFHQGGHDRSAGAGTAS. The tryptophyl-tyrosyl-methioninium (Trp-Tyr) (with M-252) cross-link spans 105 to 226; it reads WHGAGTYRSI…LGATEMGLIY (122 aa). His106 serves as the catalytic Proton acceptor. The segment at residues 226 to 252 is a cross-link (tryptophyl-tyrosyl-methioninium (Tyr-Met) (with W-105)); the sequence is YVNPEGPDHSGEPLSAAAAIRATFGNM. A heme b-binding site is contributed by His267.

Belongs to the peroxidase family. Peroxidase/catalase subfamily. In terms of assembly, homodimer or homotetramer. Heme b is required as a cofactor. Post-translationally, formation of the three residue Trp-Tyr-Met cross-link is important for the catalase, but not the peroxidase activity of the enzyme.

It catalyses the reaction H2O2 + AH2 = A + 2 H2O. The catalysed reaction is 2 H2O2 = O2 + 2 H2O. In terms of biological role, bifunctional enzyme with both catalase and broad-spectrum peroxidase activity. The protein is Catalase-peroxidase of Salmonella paratyphi B (strain ATCC BAA-1250 / SPB7).